We begin with the raw amino-acid sequence, 487 residues long: Calcium-binding tyrosine phosphorylation-regulated protein (487 aa).

Residues 12–49 (YGLKTLLEGISRAVLKTNPSDINQFAAAYFQELTMYRG) enclose the RIIa domain. Basic and acidic residues-rich tracts occupy residues 78 to 91 (KKLE…KTSV) and 101 to 117 (KSTD…EYSD). Disordered regions lie at residues 78–163 (KKLE…AVSP), 243–271 (VDLG…QEPP), and 420–487 (IVSD…ATAE). Over residues 140-152 (SSSKPATPKATTP) the composition is skewed to low complexity. 2 stretches are compositionally biased toward polar residues: residues 420 to 436 (IVSD…NSVP) and 455 to 464 (SGTSVKSSSG). Residues 478–487 (IEPEGEATAE) are compositionally biased toward acidic residues.

Interacts with FSCB. Post-translationally, phosphorylated on tyrosine residues during in vitro capacitation. Dephosphorylation affects its ability to bind calcium.

Its subcellular location is the cytoplasm. The protein resides in the cytoskeleton. The protein localises to the cell projection. It localises to the cilium. It is found in the flagellum. May function as a regulator of both motility- and head-associated functions such as capacitation and the acrosome reaction. May bind calcium in vitro. The polypeptide is Calcium-binding tyrosine phosphorylation-regulated protein (CABYR) (Macaca fascicularis (Crab-eating macaque)).